Reading from the N-terminus, the 139-residue chain is GSK3B-interacting protein (139 aa).

Residues 41-45 (VNDVL) form a required for PRKAR2A interaction; contributes to a protective effect against H(2)O(2)-induced apoptosis region. Residues 115–139 (SPAYREAFGNALLQRLEALKRDGQS) form an interaction with GSK3B and acts as a GSK3B inhibitor region.

Belongs to the GSKIP family. In terms of assembly, forms a complex composed of PRKAR2A or PRKAR2B, GSK3B and GSKIP through GSKIP interaction; facilitates PKA-induced phosphorylation of GSK3B leading to GSK3B inactivation; recruits DNM1L through GSK3B for PKA-mediated phosphorylation of DNM1L; promotes beta-catenin degradation through GSK3B-induced phosphorylation of beta-catenin; stabilizes beta-catenin and enhances Wnt-induced signaling through PKA-induced phosphorylation of beta-catenin. Interacts with GSK3B; induces GSK3B-mediated phosphorylation of GSKIP and inhibits GSK3B kinase activity. Phosphorylated by GSK3B.

The protein localises to the cytoplasm. It localises to the nucleus. In terms of biological role, A-kinase anchoring protein for GSK3B and PKA that regulates or facilitates their kinase activity towards their targets. The ternary complex enhances Wnt-induced signaling by facilitating the GSK3B- and PKA-induced phosphorylation of beta-catenin leading to beta-catenin degradation and stabilization respectively. Upon cAMP activation, the ternary complex contributes to neuroprotection against oxidative stress-induced apoptosis by facilitating the PKA-induced phosphorylation of DML1 and PKA-induced inactivation of GSK3B. During neurite outgrowth promotes neuron proliferation; while increases beta-catenin-induced transcriptional activity through GSK3B kinase activity inhibition, reduces N-cadherin level to promote cell cycle progression. May play a role in cleft palate formation and is required for postnatal life through modulation of the activity of GSK3B during development. This Mus musculus (Mouse) protein is GSK3B-interacting protein.